We begin with the raw amino-acid sequence, 981 residues long: Peroxisomal ATPase PEX6 (981 aa).

Position 119 is an omega-N-methylarginine (Arg119). ATP contacts are provided by residues 471–478 (GPPGSGKT) and 745–752 (GPPGTGKT).

This sequence belongs to the AAA ATPase family. Interacts with PEX1; forming the PEX1-PEX6 AAA ATPase complex, which is composed of a heterohexamer formed by a trimer of PEX1-PEX6 dimers. Interacts with PEX26; interaction is direct and promotes recruitment to peroxisomal membranes. Interacts with ZFAND6. As to expression, in the teeth, expressed in ameloblasts and odontoblasts. Expressed in the retina, at higher levels in the ganglion cell layer and photoreceptor layer at the joint between the outer and inner segments.

It is found in the cytoplasm. The protein resides in the cytosol. The protein localises to the peroxisome membrane. Its subcellular location is the cell projection. It localises to the cilium. It is found in the photoreceptor outer segment. The enzyme catalyses ATP + H2O = ADP + phosphate + H(+). Its function is as follows. Component of the PEX1-PEX6 AAA ATPase complex, a protein dislocase complex that mediates the ATP-dependent extraction of the PEX5 receptor from peroxisomal membranes, an essential step for PEX5 recycling. Specifically recognizes PEX5 monoubiquitinated at 'Cys-11', and pulls it out of the peroxisome lumen through the PEX2-PEX10-PEX12 retrotranslocation channel. Extraction by the PEX1-PEX6 AAA ATPase complex is accompanied by unfolding of the TPR repeats and release of bound cargo from PEX5. The polypeptide is Peroxisomal ATPase PEX6 (Mus musculus (Mouse)).